Here is a 634-residue protein sequence, read N- to C-terminus: Chaperone protein HtpG (634 aa).

An a; substrate-binding region spans residues 1–342 (MSVETQKETL…SNDLSLNVSR (342 aa)). The tract at residues 343-559 (EILQKDPIID…EQDLGLQMRQ (217 aa)) is b. A c region spans residues 560–634 (ILEASGQKVP…LNKLLVELSV (75 aa)).

This sequence belongs to the heat shock protein 90 family. Homodimer.

The protein localises to the cytoplasm. Molecular chaperone. Has ATPase activity. This is Chaperone protein HtpG from Pseudomonas fluorescens (strain ATCC BAA-477 / NRRL B-23932 / Pf-5).